The primary structure comprises 181 residues: Transmembrane protein 47 (181 aa).

Residue Ala2 is modified to N-acetylalanine. 4 helical membrane passes run 21–41 (LVGL…VLSP), 83–103 (ALLL…LISI), 115–135 (VAVM…LYPI), and 152–172 (GYGL…LYCL).

Belongs to the TMEM47 family. In terms of assembly, interacts with CTNNB1, CTNNA1, PRKCI, PARD6B. Interacts with FYB1. As to expression, expressed in podocytes (at protein level).

The protein resides in the membrane. Its subcellular location is the cell junction. The protein localises to the adherens junction. Its function is as follows. Regulates cell junction organization in epithelial cells. May play a role in the transition from adherens junction to tight junction assembly. May regulate F-actin polymerization required for tight junctional localization dynamics and affect the junctional localization of PARD6B. During podocyte differentiation may negatively regulate activity of FYN and subsequently the abundance of nephrin. This chain is Transmembrane protein 47 (Tmem47), found in Mus musculus (Mouse).